Reading from the N-terminus, the 562-residue chain is Serine palmitoyltransferase 2 (562 aa).

A helical membrane pass occupies residues 67–87 (PMLVAVLTYVGYGVLTLFGYL). Position 379 is an N6-(pyridoxal phosphate)lysine (K379).

The protein belongs to the class-II pyridoxal-phosphate-dependent aminotransferase family. Component of the serine palmitoyltransferase (SPT) complex, which is composed of SPTLC1, SPTLC2 or SPTLC3 and SPTSSA or SPTSSB. The heterodimer consisting of SPTLC1 and SPTLC2/SPTLC3 forms the catalytic core of the enzyme, while SPTSSA or SPTSSB subunits determine substrate specificity. SPT also interacts with ORMDL proteins, especially ORMDL3, which negatively regulate SPT activity in the presence of ceramides. Forms dimers of heterodimers with SPTLC1. It depends on pyridoxal 5'-phosphate as a cofactor. As to expression, widely expressed.

It localises to the endoplasmic reticulum membrane. It carries out the reaction L-serine + hexadecanoyl-CoA + H(+) = 3-oxosphinganine + CO2 + CoA. The catalysed reaction is octadecanoyl-CoA + L-serine + H(+) = 3-oxoeicosasphinganine + CO2 + CoA. Its pathway is lipid metabolism; sphingolipid metabolism. With respect to regulation, SPT complex catalytic activity is negatively regulated by ORMDL proteins, including ORMDL3, in the presence of ceramides. This mechanism allows to maintain ceramide levels at sufficient concentrations for the production of complex sphingolipids, but which prevents the accumulation of ceramides to levels that trigger apoptosis. Functionally, component of the serine palmitoyltransferase multisubunit enzyme (SPT) that catalyzes the initial and rate-limiting step in sphingolipid biosynthesis by condensing L-serine and activated acyl-CoA (most commonly palmitoyl-CoA) to form long-chain bases. The SPT complex is composed of SPTLC1, SPTLC2 or SPTLC3 and SPTSSA or SPTSSB. Within this complex, the heterodimer consisting of SPTLC1 and SPTLC2/SPTLC3 forms the catalytic core. The composition of the serine palmitoyltransferase (SPT) complex determines the substrate preference. The SPTLC1-SPTLC2-SPTSSA complex shows a strong preference for C16-CoA substrate, while the SPTLC1-SPTLC3-SPTSSA isozyme uses both C14-CoA and C16-CoA as substrates, with a slight preference for C14-CoA. The SPTLC1-SPTLC2-SPTSSB complex shows a strong preference for C18-CoA substrate, while the SPTLC1-SPTLC3-SPTSSB isozyme displays an ability to use a broader range of acyl-CoAs, without apparent preference. Crucial for adipogenesis. The protein is Serine palmitoyltransferase 2 of Homo sapiens (Human).